The primary structure comprises 48 residues: uncharacterized protein (48 aa).

The chain crosses the membrane as a helical span at residues 6–26 (IILLMIVCLVVSVLVVVWIIL).

It is found in the host membrane. This is an uncharacterized protein from Spiroplasma melliferum (SpV4).